The following is a 642-amino-acid chain: Threonine--tRNA ligase (642 aa).

Positions 1–61 (MPIITLPDGS…SEDANLEIIT (61 aa)) constitute a TGS domain. The segment at 243-534 (DHRKIGKALD…ITEEYAGFFP (292 aa)) is catalytic. Zn(2+) contacts are provided by C334, H385, and H511.

Belongs to the class-II aminoacyl-tRNA synthetase family. In terms of assembly, homodimer. The cofactor is Zn(2+).

It localises to the cytoplasm. It carries out the reaction tRNA(Thr) + L-threonine + ATP = L-threonyl-tRNA(Thr) + AMP + diphosphate + H(+). Functionally, catalyzes the attachment of threonine to tRNA(Thr) in a two-step reaction: L-threonine is first activated by ATP to form Thr-AMP and then transferred to the acceptor end of tRNA(Thr). Also edits incorrectly charged L-seryl-tRNA(Thr). This chain is Threonine--tRNA ligase, found in Histophilus somni (strain 129Pt) (Haemophilus somnus).